Reading from the N-terminus, the 267-residue chain is 4-hydroxy-tetrahydrodipicolinate reductase (267 aa).

Residues G9–M14 and D35 contribute to the NAD(+) site. NADP(+) is bound at residue R36. NAD(+) is bound by residues G99 to T101 and A123 to Y126. The active-site Proton donor/acceptor is H156. H157 is a binding site for (S)-2,3,4,5-tetrahydrodipicolinate. K160 functions as the Proton donor in the catalytic mechanism. Position 166–167 (G166–T167) interacts with (S)-2,3,4,5-tetrahydrodipicolinate.

It belongs to the DapB family.

The protein localises to the cytoplasm. It catalyses the reaction (S)-2,3,4,5-tetrahydrodipicolinate + NAD(+) + H2O = (2S,4S)-4-hydroxy-2,3,4,5-tetrahydrodipicolinate + NADH + H(+). It carries out the reaction (S)-2,3,4,5-tetrahydrodipicolinate + NADP(+) + H2O = (2S,4S)-4-hydroxy-2,3,4,5-tetrahydrodipicolinate + NADPH + H(+). The protein operates within amino-acid biosynthesis; L-lysine biosynthesis via DAP pathway; (S)-tetrahydrodipicolinate from L-aspartate: step 4/4. Its function is as follows. Catalyzes the conversion of 4-hydroxy-tetrahydrodipicolinate (HTPA) to tetrahydrodipicolinate. The sequence is that of 4-hydroxy-tetrahydrodipicolinate reductase from Alkalilimnicola ehrlichii (strain ATCC BAA-1101 / DSM 17681 / MLHE-1).